The sequence spans 399 residues: Tyrosine--tRNA ligase 2 (399 aa).

The short motif at 43-52 (PTAPDLHLGH) is the 'HIGH' region element. A 'KMSKS' region motif is present at residues 227–231 (KMSKS). Position 230 (K230) interacts with ATP. Residues 338-398 (ITLLDLCSVA…IGKRYKFRIG (61 aa)) enclose the S4 RNA-binding domain.

The protein belongs to the class-I aminoacyl-tRNA synthetase family. TyrS type 2 subfamily. As to quaternary structure, homodimer.

It is found in the cytoplasm. The catalysed reaction is tRNA(Tyr) + L-tyrosine + ATP = L-tyrosyl-tRNA(Tyr) + AMP + diphosphate + H(+). Functionally, catalyzes the attachment of tyrosine to tRNA(Tyr) in a two-step reaction: tyrosine is first activated by ATP to form Tyr-AMP and then transferred to the acceptor end of tRNA(Tyr). The sequence is that of Tyrosine--tRNA ligase 2 from Photorhabdus laumondii subsp. laumondii (strain DSM 15139 / CIP 105565 / TT01) (Photorhabdus luminescens subsp. laumondii).